Reading from the N-terminus, the 305-residue chain is Dihydroorotate dehydrogenase B (NAD(+)), catalytic subunit (305 aa).

FMN is bound by residues Ser23 and 47-48 (KG). Residues Lys47 and 71 to 75 (NAIGL) contribute to the substrate site. Residues Asn101 and Asn129 each coordinate FMN. A substrate-binding site is contributed by Asn129. Catalysis depends on Cys132, which acts as the Nucleophile. FMN is bound by residues Lys167 and Ile193. 194-195 (NT) is a binding site for substrate. FMN contacts are provided by residues Gly219, 245 to 246 (GG), and 267 to 268 (GT).

Belongs to the dihydroorotate dehydrogenase family. Type 1 subfamily. Heterotetramer of 2 PyrK and 2 PyrD type B subunits. FMN is required as a cofactor.

It localises to the cytoplasm. The enzyme catalyses (S)-dihydroorotate + NAD(+) = orotate + NADH + H(+). Its pathway is pyrimidine metabolism; UMP biosynthesis via de novo pathway; orotate from (S)-dihydroorotate (NAD(+) route): step 1/1. In terms of biological role, catalyzes the conversion of dihydroorotate to orotate with NAD(+) as electron acceptor. The polypeptide is Dihydroorotate dehydrogenase B (NAD(+)), catalytic subunit (pyrD) (Geotalea daltonii (strain DSM 22248 / JCM 15807 / FRC-32) (Geobacter daltonii)).